A 277-amino-acid polypeptide reads, in one-letter code: Large ribosomal subunit protein uL2c (277 aa).

Residues V223–S277 form a disordered region.

The protein belongs to the universal ribosomal protein uL2 family. In terms of assembly, part of the 50S ribosomal subunit.

The protein resides in the plastid. It is found in the chloroplast. This is Large ribosomal subunit protein uL2c (rpl2) from Marchantia polymorpha (Common liverwort).